The sequence spans 101 residues: Small ribosomal subunit protein bS6 (101 aa).

It belongs to the bacterial ribosomal protein bS6 family.

Its function is as follows. Binds together with bS18 to 16S ribosomal RNA. The sequence is that of Small ribosomal subunit protein bS6 from Paenarthrobacter aurescens (strain TC1).